Consider the following 165-residue polypeptide: UPF0114 protein Ent638_3411 (165 aa).

The next 3 helical transmembrane spans lie at 15–35 (LLAPVYFGLSLALVALSIKFF), 53–73 (LILVLLSLVDMTLVGGLLVMV), and 136–156 (LMWYVIIHLTFVLSAFVMGYL).

It belongs to the UPF0114 family.

The protein resides in the cell membrane. The chain is UPF0114 protein Ent638_3411 from Enterobacter sp. (strain 638).